The primary structure comprises 180 residues: Superoxide dismutase [Cu-Zn] (180 aa).

Positions 1–19 (MFMNLLTQVSNAIFPQVEA) are cleaved as a signal peptide. Residues His-68, His-70, and His-85 each contribute to the Cu cation site. A disulfide bridge connects residues Cys-79 and Cys-171. The Zn(2+) site is built by His-85, His-93, His-102, and Asp-105. His-142 contributes to the Cu cation binding site.

The protein belongs to the Cu-Zn superoxide dismutase family. As to quaternary structure, homodimer. Requires Cu cation as cofactor. The cofactor is Zn(2+).

Its subcellular location is the cytoplasm. It catalyses the reaction 2 superoxide + 2 H(+) = H2O2 + O2. The insertion of copper which activates the protein requires glutathione. This is independent of copper chaperone for SOD1 (CCS), which activates orthologs. Functionally, protects cells against oxidative stress by converting superoxide radicals to hydrogen peroxide. Required for normal brood size. May be involved in regulating mpk-1 phosphorylation downstream of phosphatase ptp-2 during oocyte maturation. This Caenorhabditis elegans protein is Superoxide dismutase [Cu-Zn] (sod-1).